Reading from the N-terminus, the 296-residue chain is Protoheme IX farnesyltransferase (296 aa).

The next 9 helical transmembrane spans lie at 8–28, 35–55, 84–104, 107–127, 132–152, 162–182, 208–228, 229–249, and 263–283; these read VTKPGIIFGNLISVVGGFLLA, YPLFLATLVGVSLVVASGCVF, VSLVYATALGIAGFALLYIGA, LAMWLAVMGFVVYVGVYSLYM, VYGTLIGSLSGAAPPVIGYCA, LILLAIFSLWQMPHSYAIAIF, ITVYIVAFMIATLMLTLGGYA, GYKYLIVAAAVSVWWLGMALR, and LFVFSIVAITSLSVMMSIDFS.

The protein belongs to the UbiA prenyltransferase family. Protoheme IX farnesyltransferase subfamily.

The protein localises to the cell inner membrane. The enzyme catalyses heme b + (2E,6E)-farnesyl diphosphate + H2O = Fe(II)-heme o + diphosphate. It participates in porphyrin-containing compound metabolism; heme O biosynthesis; heme O from protoheme: step 1/1. Functionally, converts heme B (protoheme IX) to heme O by substitution of the vinyl group on carbon 2 of heme B porphyrin ring with a hydroxyethyl farnesyl side group. The chain is Protoheme IX farnesyltransferase from Serratia proteamaculans (strain 568).